Reading from the N-terminus, the 508-residue chain is Photosystem II CP47 reaction center protein (508 aa).

The next 6 helical transmembrane spans lie at 21–36 (SVHI…WAGS), 101–115 (IVFS…IWHW), 140–156 (GIHL…FGAF), 203–218 (IAAG…FHLS), 237–252 (VLSS…AFVV), and 457–472 (SFAL…HGAR).

The protein belongs to the PsbB/PsbC family. PsbB subfamily. As to quaternary structure, PSII is composed of 1 copy each of membrane proteins PsbA, PsbB, PsbC, PsbD, PsbE, PsbF, PsbH, PsbI, PsbJ, PsbK, PsbL, PsbM, PsbT, PsbX, PsbY, PsbZ, Psb30/Ycf12, at least 3 peripheral proteins of the oxygen-evolving complex and a large number of cofactors. It forms dimeric complexes. It depends on Binds multiple chlorophylls. PSII binds additional chlorophylls, carotenoids and specific lipids. as a cofactor.

Its subcellular location is the plastid. The protein localises to the chloroplast thylakoid membrane. One of the components of the core complex of photosystem II (PSII). It binds chlorophyll and helps catalyze the primary light-induced photochemical processes of PSII. PSII is a light-driven water:plastoquinone oxidoreductase, using light energy to abstract electrons from H(2)O, generating O(2) and a proton gradient subsequently used for ATP formation. This Phaseolus vulgaris (Kidney bean) protein is Photosystem II CP47 reaction center protein.